The sequence spans 29 residues: Cytochrome b6-f complex subunit 8 (29 aa).

A helical transmembrane segment spans residues 3 to 23; the sequence is IVSFAWAALMVVFTFSLSLVV.

Belongs to the PetN family. As to quaternary structure, the 4 large subunits of the cytochrome b6-f complex are cytochrome b6, subunit IV (17 kDa polypeptide, PetD), cytochrome f and the Rieske protein, while the 4 small subunits are PetG, PetL, PetM and PetN. The complex functions as a dimer.

The protein resides in the plastid. It is found in the chloroplast thylakoid membrane. Its function is as follows. Component of the cytochrome b6-f complex, which mediates electron transfer between photosystem II (PSII) and photosystem I (PSI), cyclic electron flow around PSI, and state transitions. The polypeptide is Cytochrome b6-f complex subunit 8 (Phalaenopsis aphrodite subsp. formosana (Moth orchid)).